The following is a 118-amino-acid chain: Small ribosomal subunit protein uS13 (118 aa).

The segment at 94–118 (GLPVRGQRTQTNARTRKGPRRLARK) is disordered. A compositionally biased stretch (basic residues) spans 107 to 118 (RTRKGPRRLARK).

This sequence belongs to the universal ribosomal protein uS13 family. In terms of assembly, part of the 30S ribosomal subunit. Forms a loose heterodimer with protein S19. Forms two bridges to the 50S subunit in the 70S ribosome.

Its function is as follows. Located at the top of the head of the 30S subunit, it contacts several helices of the 16S rRNA. In the 70S ribosome it contacts the 23S rRNA (bridge B1a) and protein L5 of the 50S subunit (bridge B1b), connecting the 2 subunits; these bridges are implicated in subunit movement. Contacts the tRNAs in the A and P-sites. The sequence is that of Small ribosomal subunit protein uS13 from Nitrosococcus oceani (strain ATCC 19707 / BCRC 17464 / JCM 30415 / NCIMB 11848 / C-107).